The sequence spans 375 residues: Carboxypeptidase O (375 aa).

A signal peptide spans Met1–Gly20. A Peptidase M14 domain is found at Arg50–Val345. Zn(2+) contacts are provided by His109 and Glu112. A glycan (N-linked (GlcNAc...) asparagine) is linked at Asn175. His237 is a Zn(2+) binding site. N-linked (GlcNAc...) asparagine glycosylation is present at Asn252. The active-site Proton donor/acceptor is the Glu311. Residue Asn315 is glycosylated (N-linked (GlcNAc...) asparagine). Residue Ser354 is the site of GPI-anchor amidated serine attachment. A propeptide spans Ala355–Leu375 (removed in mature form).

It belongs to the peptidase M14 family. Zn(2+) serves as cofactor.

The protein resides in the apical cell membrane. Its function is as follows. Carboxypeptidase which preferentially cleaves C-terminal acidic residues from peptides and proteins. Can also cleave C-terminal hydrophobic amino acids, with a preference for small residues over large residues. The polypeptide is Carboxypeptidase O (Bos taurus (Bovine)).